A 190-amino-acid chain; its full sequence is Riboflavin transporter FmnP (190 aa).

Over 1-5 (MKVKK) the chain is Extracellular. A helical transmembrane segment spans residues 6-26 (LVVVSMLSSIAFVLMLLNFPF). Residues 27–39 (PGLPDYLKIDFSD) are Cytoplasmic-facing. The chain crosses the membrane as a helical span at residues 40–60 (VPAIIAILIYGPLAGIAVEAI). The Extracellular portion of the chain corresponds to 61–76 (KNVLQYIIQGSMAGVP). Residues 77 to 97 (VGQVANFIAGTLFILPTAFLF) traverse the membrane as a helical segment. Topologically, residues 98 to 109 (KKLNSAKGLAVS) are cytoplasmic. Residues 110 to 130 (LLLGTAAMTILMSILNYVLIL) traverse the membrane as a helical segment. Topologically, residues 131–154 (PAYTWFLHSPALSDSALKTAVVAG) are extracellular. Residues 155 to 175 (ILPFNMIKGIVITVVFSLIFI) form a helical membrane-spanning segment. Over 176-190 (KLKPWIEQQRSAHIH) the chain is Cytoplasmic.

Belongs to the prokaryotic riboflavin transporter (P-RFT) (TC 2.A.87) family. In terms of assembly, forms a stable energy-coupling factor (ECF) transporter complex composed of a membrane-embedded substrate-binding protein (S component), 2 ATP-binding proteins (A component) and 2 transmembrane proteins (T component). May be able to interact with more than 1 S component at a time.

The protein resides in the cell membrane. Its activity is regulated as follows. Inhibited by excess of riboflavin or FMN. Also inhibited by protonophores such as CCCP and FCCP or in the absence of glucose. Functionally, mediates uptake of riboflavin and roseoflavin, a toxic riboflavin analog; may also transport FMN. Probably a riboflavin-binding protein that interacts with the energy-coupling factor (ECF) ABC-transporter complex. Unlike classic ABC transporters this ECF transporter provides the energy necessary to transport a number of different substrates. The substrates themselves are bound by transmembrane, not extracytoplasmic soluble proteins. The chain is Riboflavin transporter FmnP (fmnP) from Bacillus subtilis (strain 168).